The sequence spans 130 residues: Small ribosomal subunit protein uS11 (130 aa).

Belongs to the universal ribosomal protein uS11 family. In terms of assembly, part of the 30S ribosomal subunit. Interacts with proteins S7 and S18. Binds to IF-3.

In terms of biological role, located on the platform of the 30S subunit, it bridges several disparate RNA helices of the 16S rRNA. Forms part of the Shine-Dalgarno cleft in the 70S ribosome. In Shewanella amazonensis (strain ATCC BAA-1098 / SB2B), this protein is Small ribosomal subunit protein uS11.